The following is a 438-amino-acid chain: Histidine--tRNA ligase (438 aa).

The protein belongs to the class-II aminoacyl-tRNA synthetase family. Homodimer.

It localises to the cytoplasm. It catalyses the reaction tRNA(His) + L-histidine + ATP = L-histidyl-tRNA(His) + AMP + diphosphate + H(+). This is Histidine--tRNA ligase from Aromatoleum aromaticum (strain DSM 19018 / LMG 30748 / EbN1) (Azoarcus sp. (strain EbN1)).